We begin with the raw amino-acid sequence, 571 residues long: MAKVRIYQLAKELGMETQELLELLDQMGVAYKSHASTLEEKDAEAVRELVKEQRGLQEKLAEEERRKSLPRRPPVVVIMGHVDHGKTTLLDYLRKSRIAEKEAGGITQHVGAFEVKTPQGTVVFIDTPGHEAFTTIRQRGAKVADIAVIVIAADDGIMPQTEEAIAHAKAAGAKLIFAINKIDLPQADPEKVKRQLMERGFVPEEYGGDAIVIPISAKTGQGVQDLLEMILLLAELEDYRADPNAEPRGVILESKLDKQAGIIANMLVQEGTFRVGDYVVAGEAYGRIRAMMDADGNQRKEAGPGSAVQVLGFQELPHAGDVVEWVPDLEAAKEIAEERKEERKAREEEEKARRPRTMAELLRAMQEEGRKELNLILRADTQGSLEAIQHILARESTEDVKINILLAQVGAPTESDVLLAQTANAAILAFGVNPPGSVKKKAEEKGVLLKTFRIIYDLVDEVRNMVKGQREPQYKEEVLGQAEVRAIFRLPTGKQVAGCMVTQGRIPRNAEVRVLRDGQVIWQGRIASLKRFKEDVREVAQGYECGIGLDGFDDFREGDVIEAFQMVEVPA.

Residues 71–239 (RRPPVVVIMG…ILLLAELEDY (169 aa)) form the tr-type G domain. The G1 stretch occupies residues 80–87 (GHVDHGKT). 80–87 (GHVDHGKT) contacts GTP. A G2 region spans residues 105–109 (GITQH). The G3 stretch occupies residues 126–129 (DTPG). Residues 126 to 130 (DTPGH) and 180 to 183 (NKID) contribute to the GTP site. A G4 region spans residues 180–183 (NKID). Residues 216-218 (SAK) are G5.

It belongs to the TRAFAC class translation factor GTPase superfamily. Classic translation factor GTPase family. IF-2 subfamily.

It localises to the cytoplasm. One of the essential components for the initiation of protein synthesis. Protects formylmethionyl-tRNA from spontaneous hydrolysis and promotes its binding to the 30S ribosomal subunits. Also involved in the hydrolysis of GTP during the formation of the 70S ribosomal complex. The chain is Translation initiation factor IF-2 from Thermus thermophilus (strain ATCC BAA-163 / DSM 7039 / HB27).